A 129-amino-acid polypeptide reads, in one-letter code: Large ribosomal subunit protein bL12c (129 aa).

It belongs to the bacterial ribosomal protein bL12 family. Homodimer. Part of the ribosomal stalk of the 50S ribosomal subunit. Forms a multimeric L10(L12)X complex, where L10 forms an elongated spine to which 2 to 4 L12 dimers bind in a sequential fashion. Binds GTP-bound translation factors.

It localises to the plastid. The protein localises to the chloroplast. Its function is as follows. Forms part of the ribosomal stalk which helps the ribosome interact with GTP-bound translation factors. Is thus essential for accurate translation. The sequence is that of Large ribosomal subunit protein bL12c from Porphyra purpurea (Red seaweed).